The following is a 156-amino-acid chain: Ribosomal RNA large subunit methyltransferase H (156 aa).

S-adenosyl-L-methionine is bound by residues leucine 73, glycine 104, and 123-128; that span reads LSPLTL.

The protein belongs to the RNA methyltransferase RlmH family. Homodimer.

The protein localises to the cytoplasm. The catalysed reaction is pseudouridine(1915) in 23S rRNA + S-adenosyl-L-methionine = N(3)-methylpseudouridine(1915) in 23S rRNA + S-adenosyl-L-homocysteine + H(+). In terms of biological role, specifically methylates the pseudouridine at position 1915 (m3Psi1915) in 23S rRNA. The sequence is that of Ribosomal RNA large subunit methyltransferase H from Edwardsiella ictaluri (strain 93-146).